Here is a 552-residue protein sequence, read N- to C-terminus: (R)-mandelonitrile lyase-like (552 aa).

An N-terminal signal peptide occupies residues methionine 1 to alanine 28. N-linked (GlcNAc...) asparagine glycosylation is present at asparagine 44. Aspartate 55–glutamate 82 serves as a coordination point for FAD. Residues asparagine 162, asparagine 259, and asparagine 434 are each glycosylated (N-linked (GlcNAc...) asparagine). Histidine 492 acts as the Proton acceptor in catalysis.

Belongs to the GMC oxidoreductase family. In terms of assembly, monomer. It depends on FAD as a cofactor. In terms of processing, glycosylated.

It catalyses the reaction (R)-mandelonitrile = benzaldehyde + hydrogen cyanide. This chain is (R)-mandelonitrile lyase-like, found in Arabidopsis thaliana (Mouse-ear cress).